The chain runs to 666 residues: Endogenous retrovirus group K member 19 Gag polyprotein (666 aa).

The N-myristoyl glycine moiety is linked to residue G2. 2 disordered regions span residues 170–189 (LVGP…AGQV) and 223–264 (PLES…GSEL). A compositionally biased stretch (pro residues) spans 232–247 (GMPPAPQGRAPYPQPP). 2 CCHC-type zinc fingers span residues 544–561 (GKCY…NCPV) and 580–597 (DLCP…QCRS). The disordered stretch occupies residues 598–640 (KFDKNGQPLSGNEQRGQPQAPQQTGAFPIQPFVPHGFQGQQPP). Over residues 604–622 (QPLSGNEQRGQPQAPQQTG) the composition is skewed to polar residues.

This sequence belongs to the beta type-B retroviral Gag protein family. HERV class-II K(HML-2) gag subfamily. Post-translationally, myristoylation is essential for retroviral assembly. Alteration of the glycine residue leads to a block in the budding of particles and an accumulation of Gag inside the cell. In terms of processing, specific enzymatic cleavages may yield mature proteins.

It localises to the cell membrane. Its function is as follows. The products of the Gag polyproteins of infectious retroviruses perform highly complex orchestrated tasks during the assembly, budding, maturation, and infection stages of the viral replication cycle. During viral assembly, the proteins form membrane associations and self-associations that ultimately result in budding of an immature virion from the infected cell. Gag precursors also function during viral assembly to selectively bind and package two plus strands of genomic RNA. Endogenous Gag proteins may have kept, lost or modified their original function during evolution. The sequence is that of Endogenous retrovirus group K member 19 Gag polyprotein (ERVK-19) from Homo sapiens (Human).